We begin with the raw amino-acid sequence, 169 residues long: Ribosome maturation factor RimM (169 aa).

A PRC barrel domain is found at 97 to 169; sequence EDEYYWADLV…TITADWGLDY (73 aa).

Belongs to the RimM family. As to quaternary structure, binds ribosomal protein uS19.

The protein localises to the cytoplasm. Functionally, an accessory protein needed during the final step in the assembly of 30S ribosomal subunit, possibly for assembly of the head region. Essential for efficient processing of 16S rRNA. May be needed both before and after RbfA during the maturation of 16S rRNA. It has affinity for free ribosomal 30S subunits but not for 70S ribosomes. The sequence is that of Ribosome maturation factor RimM from Neisseria gonorrhoeae (strain ATCC 700825 / FA 1090).